We begin with the raw amino-acid sequence, 279 residues long: Large ribosomal subunit protein uL2 (279 aa).

Disordered stretches follow at residues 1-59 (MGIR…GGHK) and 224-279 (VAMN…KNKR). Basic residues-rich tracts occupy residues 50-59 (TTRHKGGGHK) and 269-279 (VRRRRTGKNKR).

Belongs to the universal ribosomal protein uL2 family. Part of the 50S ribosomal subunit. Forms a bridge to the 30S subunit in the 70S ribosome.

One of the primary rRNA binding proteins. Required for association of the 30S and 50S subunits to form the 70S ribosome, for tRNA binding and peptide bond formation. It has been suggested to have peptidyltransferase activity; this is somewhat controversial. Makes several contacts with the 16S rRNA in the 70S ribosome. The sequence is that of Large ribosomal subunit protein uL2 from Arthrobacter sp. (strain FB24).